Consider the following 83-residue polypeptide: Large ribosomal subunit protein uL24 (83 aa).

Belongs to the universal ribosomal protein uL24 family. Part of the 50S ribosomal subunit.

In terms of biological role, one of two assembly initiator proteins, it binds directly to the 5'-end of the 23S rRNA, where it nucleates assembly of the 50S subunit. Its function is as follows. One of the proteins that surrounds the polypeptide exit tunnel on the outside of the subunit. This chain is Large ribosomal subunit protein uL24, found in Symbiobacterium thermophilum (strain DSM 24528 / JCM 14929 / IAM 14863 / T).